Consider the following 249-residue polypeptide: NAD kinase (249 aa).

The active-site Proton acceptor is the Asp-45. Residues 45–46 (DG), Arg-50, 110–111 (NE), Asp-138, and 149–154 (SGWGMS) each bind NAD(+).

Belongs to the NAD kinase family. A divalent metal cation is required as a cofactor.

The protein localises to the cytoplasm. The enzyme catalyses NAD(+) + ATP = ADP + NADP(+) + H(+). Its function is as follows. Involved in the regulation of the intracellular balance of NAD and NADP, and is a key enzyme in the biosynthesis of NADP. Catalyzes specifically the phosphorylation on 2'-hydroxyl of the adenosine moiety of NAD to yield NADP. The chain is NAD kinase from Saccharolobus solfataricus (strain ATCC 35092 / DSM 1617 / JCM 11322 / P2) (Sulfolobus solfataricus).